Reading from the N-terminus, the 286-residue chain is Phosphoribosylaminoimidazole-succinocarboxamide synthase (286 aa).

This sequence belongs to the SAICAR synthetase family.

The catalysed reaction is 5-amino-1-(5-phospho-D-ribosyl)imidazole-4-carboxylate + L-aspartate + ATP = (2S)-2-[5-amino-1-(5-phospho-beta-D-ribosyl)imidazole-4-carboxamido]succinate + ADP + phosphate + 2 H(+). Its pathway is purine metabolism; IMP biosynthesis via de novo pathway; 5-amino-1-(5-phospho-D-ribosyl)imidazole-4-carboxamide from 5-amino-1-(5-phospho-D-ribosyl)imidazole-4-carboxylate: step 1/2. The chain is Phosphoribosylaminoimidazole-succinocarboxamide synthase from Histophilus somni (strain 2336) (Haemophilus somnus).